The chain runs to 174 residues: Co-chaperone protein HscB homolog (174 aa).

The J domain occupies 2 to 74 (NYFNLFNFTP…LRRAEHLLSL (73 aa)).

It belongs to the HscB family. As to quaternary structure, interacts with HscA and stimulates its ATPase activity.

Functionally, co-chaperone involved in the maturation of iron-sulfur cluster-containing proteins. Seems to help targeting proteins to be folded toward HscA. In Shewanella denitrificans (strain OS217 / ATCC BAA-1090 / DSM 15013), this protein is Co-chaperone protein HscB homolog.